We begin with the raw amino-acid sequence, 172 residues long: Large ribosomal subunit protein uL10 (172 aa).

It belongs to the universal ribosomal protein uL10 family. Part of the ribosomal stalk of the 50S ribosomal subunit. The N-terminus interacts with L11 and the large rRNA to form the base of the stalk. The C-terminus forms an elongated spine to which L12 dimers bind in a sequential fashion forming a multimeric L10(L12)X complex.

Its function is as follows. Forms part of the ribosomal stalk, playing a central role in the interaction of the ribosome with GTP-bound translation factors. This Bartonella bacilliformis (strain ATCC 35685 / KC583 / Herrer 020/F12,63) protein is Large ribosomal subunit protein uL10.